The primary structure comprises 562 residues: Alpha-1D adrenergic receptor (562 aa).

At 1-90 (MTFRDILSVT…VGGLVVSAQG (90 aa)) the chain is on the extracellular side. Disordered stretches follow at residues 13–44 (GPRA…GVPG) and 50–69 (AVVG…EAGA). A compositionally biased stretch (gly residues) spans 21-44 (GGSGAGGGAGTVGPEGPAVGGVPG). N-linked (GlcNAc...) asparagine glycosylation is found at Asn60 and Asn76. A helical membrane pass occupies residues 91-115 (VGVGVFLAAFILTAVAGNLLVILSV). The Cytoplasmic portion of the chain corresponds to 116–127 (ACNRHLQTVTNY). A helical transmembrane segment spans residues 128–153 (FIVNLAVADLLLSAAVLPFSATMEVL). Residues 154–163 (GFWPFGRTFC) are Extracellular-facing. A helical membrane pass occupies residues 164–186 (DVWAAVDVLCCTASILSLCTISV). The Cytoplasmic segment spans residues 187 to 207 (DRYVGVRHSLKYPAIMTERKA). A helical membrane pass occupies residues 208-232 (AAILALLWAVALVVSVGPLLGWKEP). Residues 233 to 245 (VPPDERFCGITEE) lie on the Extracellular side of the membrane. The helical transmembrane segment at 246 to 269 (VGYAIFSSVCSFYLPMAVIVVMYC) threads the bilayer. Residues 270 to 342 (RVYVVARSTT…KFSREKKAAK (73 aa)) lie on the Cytoplasmic side of the membrane. A helical transmembrane segment spans residues 343–367 (TLAIVVGVFVLCWFPFFFVLPLGSL). At 368-374 (FPQLKPS) the chain is on the extracellular side. Residues 375–399 (EGVFKVIFWLGYFNSCVNPLIYPCS) form a helical membrane-spanning segment. Residues 400–562 (SREFKRAFLR…DLSNLRETDI (163 aa)) lie on the Cytoplasmic side of the membrane. A lipid anchor (S-palmitoyl cysteine) is attached at Cys413. A disordered region spans residues 444-472 (QPAHRTPRGSPSPHCTPRPGLRRHAGGAG).

Belongs to the G-protein coupled receptor 1 family. Adrenergic receptor subfamily. ADRA1D sub-subfamily. In terms of assembly, interacts with FLNA (via filamin repeat 21); increases PKA-mediated phosphorylation of FLNA. Palmitoylated. Palmitoylation by ZDHHC21 may increase the expression of the receptor and regulate downstream signaling.

It localises to the cell membrane. Functionally, this alpha-adrenergic receptor mediates its effect through the influx of extracellular calcium. This chain is Alpha-1D adrenergic receptor (Adra1d), found in Mus musculus (Mouse).